Reading from the N-terminus, the 151-residue chain is CD-NTase-associated protein 19 (151 aa).

The next 3 membrane-spanning stretches (helical) occupy residues 25–45 (TVFNFYIAITGLLAAGIGVTL), 52–72 (VLFTSLMGVFVAFISFIFWKL), and 127–147 (ISFVIVGFTGILLAITPFLMK).

It belongs to the Cap19 family.

The protein localises to the cell inner membrane. In terms of biological role, membrane protein component of a CBASS (cyclic oligonucleotide-based antiphage signaling system) which provides immunity against bacteriophage. The CD-NTase protein synthesizes cyclic nucleotides in response to infection; these serve as specific second messenger signals. The signals activate a diverse range of effectors, leading to bacterial cell death and thus abortive phage infection. A type III CBASS system. Expression of this CBASS system (Cap17-CapW-CdnC-Cap7-Cap6-Cap18-Cap19) in a susceptible E.coli (strain JP313) confers resistance to bacteriophage lambda cI-. The polypeptide is CD-NTase-associated protein 19 (Escherichia coli).